A 242-amino-acid chain; its full sequence is Probable transcriptional regulatory protein EUBREC_1961 (242 aa).

It belongs to the TACO1 family.

It is found in the cytoplasm. The sequence is that of Probable transcriptional regulatory protein EUBREC_1961 from Agathobacter rectalis (strain ATCC 33656 / DSM 3377 / JCM 17463 / KCTC 5835 / VPI 0990) (Eubacterium rectale).